Reading from the N-terminus, the 424-residue chain is MLDIRVIRENVQWAKDKLATRGIDAAEIDEVVALDEKRRALIVRTEELKKNRNAASEAIAVAKRNKEDATEQIAAMKNVGAEIKELDAQLAEVKEKVDYILVRLPNFPDDSAPVGLDESFSREERKWSTPREFDFEPLAHWDIGEKLGILDFERAAKVSGSRFVYYKGAGARLERAVYNFMLDQHAKEGYEEMITPYLVNGESMFGTGQFPKFTEDVYTMTNEGEPMTLIPTAEVPLTNFYRDEILDGAQLPIYFTALSPAFRSEAGSAGRDTRGLIRMHQFNKVEMVKFTKPEESFNELEKMTADAENILKALNLPYHVITLATGDASFTSAKTYDIEVWLPAQNTYREISSCSDCTDFQARRAQIRYRDEDGHVNLVHTLNGSGLAVGRTVAAILENYQNEDGTVTIPEPLVPYMGGMTKIG.

T232–E234 lines the L-serine pocket. R263 to E265 lines the ATP pocket. An L-serine-binding site is contributed by E286. E350 to S353 serves as a coordination point for ATP. An L-serine-binding site is contributed by S385.

The protein belongs to the class-II aminoacyl-tRNA synthetase family. Type-1 seryl-tRNA synthetase subfamily. In terms of assembly, homodimer. The tRNA molecule binds across the dimer.

Its subcellular location is the cytoplasm. The catalysed reaction is tRNA(Ser) + L-serine + ATP = L-seryl-tRNA(Ser) + AMP + diphosphate + H(+). The enzyme catalyses tRNA(Sec) + L-serine + ATP = L-seryl-tRNA(Sec) + AMP + diphosphate + H(+). The protein operates within aminoacyl-tRNA biosynthesis; selenocysteinyl-tRNA(Sec) biosynthesis; L-seryl-tRNA(Sec) from L-serine and tRNA(Sec): step 1/1. In terms of biological role, catalyzes the attachment of serine to tRNA(Ser). Is also able to aminoacylate tRNA(Sec) with serine, to form the misacylated tRNA L-seryl-tRNA(Sec), which will be further converted into selenocysteinyl-tRNA(Sec). The chain is Serine--tRNA ligase from Latilactobacillus sakei subsp. sakei (strain 23K) (Lactobacillus sakei subsp. sakei).